The primary structure comprises 160 residues: MTNTPSDQPLKQANQRGAARLAAVQALYQMEIGGTGVLEIVAEFEAHRLGQELDGETYLKADASWFRSIVSGVVRDQRKLDPLIGSALQDDWALSRLDSTVRAILRAGTFELLERKDVPVAVIVTEYVEIAKAFFEDEEPKLVNAVLDRIAKQIRGERRK.

Belongs to the NusB family.

Functionally, involved in transcription antitermination. Required for transcription of ribosomal RNA (rRNA) genes. Binds specifically to the boxA antiterminator sequence of the ribosomal RNA (rrn) operons. The chain is Transcription antitermination protein NusB from Sinorhizobium fredii (strain NBRC 101917 / NGR234).